Reading from the N-terminus, the 419-residue chain is Histidine--tRNA ligase (419 aa).

Belongs to the class-II aminoacyl-tRNA synthetase family.

It is found in the cytoplasm. It carries out the reaction tRNA(His) + L-histidine + ATP = L-histidyl-tRNA(His) + AMP + diphosphate + H(+). The chain is Histidine--tRNA ligase from Pyrobaculum aerophilum (strain ATCC 51768 / DSM 7523 / JCM 9630 / CIP 104966 / NBRC 100827 / IM2).